The primary structure comprises 331 residues: 6-phosphogluconolactonase (331 aa).

It belongs to the cycloisomerase 2 family.

The catalysed reaction is 6-phospho-D-glucono-1,5-lactone + H2O = 6-phospho-D-gluconate + H(+). Its pathway is carbohydrate degradation; pentose phosphate pathway; D-ribulose 5-phosphate from D-glucose 6-phosphate (oxidative stage): step 2/3. In terms of biological role, catalyzes the hydrolysis of 6-phosphogluconolactone to 6-phosphogluconate. The sequence is that of 6-phosphogluconolactonase from Sodalis glossinidius (strain morsitans).